A 594-amino-acid polypeptide reads, in one-letter code: Glutamate decarboxylase 1 (594 aa).

Residues 1–13 are compositionally biased toward low complexity; the sequence is MASSTPSSSATSS. A disordered region spans residues 1-25; sequence MASSTPSSSATSSNAGPDPNTTNLR. S78 carries the post-translational modification Phosphoserine. 190 to 192 lines the 4-aminobutanoate pocket; that stretch reads QLS. The residue at position 405 (K405) is an N6-(pyridoxal phosphate)lysine. R567 contacts 4-aminobutanoate.

It belongs to the group II decarboxylase family. In terms of assembly, homodimer. Pyridoxal 5'-phosphate serves as cofactor.

The enzyme catalyses L-glutamate + H(+) = 4-aminobutanoate + CO2. Catalyzes the synthesis of the inhibitory neurotransmitter gamma-aminobutyric acid (GABA) with pyridoxal 5'-phosphate as cofactor. The polypeptide is Glutamate decarboxylase 1 (GAD1) (Sus scrofa (Pig)).